Here is a 410-residue protein sequence, read N- to C-terminus: uncharacterized protein (410 aa).

Transmembrane regions (helical) follow at residues Ile14–Ile34, Gly48–Ile68, Ile82–Phe102, Tyr140–Ser160, Thr164–Phe184, Tyr212–Ser232, Leu251–Val271, Pro279–Val299, Val303–Met323, Gly342–Ile362, and Ile371–Ala391.

It belongs to the major facilitator superfamily. TCR/Tet family.

The protein resides in the cell membrane. This is an uncharacterized protein from Bacillus subtilis (strain 168).